We begin with the raw amino-acid sequence, 462 residues long: dTDP-4-dehydro-2,6-dideoxy-D-glucose 3-dehydratase (462 aa).

Pyridoxal 5'-phosphate is bound by residues 112-113 (GS), Asp-220, and Ser-241. The Proton donor/acceptor role is filled by His-246. Residue Asn-314 participates in pyridoxal 5'-phosphate binding.

This sequence belongs to the DegT/DnrJ/EryC1 family. In terms of assembly, homodimer. It depends on pyridoxal 5'-phosphate as a cofactor.

It catalyses the reaction dTDP-4-dehydro-2,6-dideoxy-alpha-D-glucose + 2 reduced [2Fe-2S]-[ferredoxin] + 2 H(+) = dTDP-4-dehydro-2,3,6-trideoxy-alpha-D-hexopyranose + 2 oxidized [2Fe-2S]-[ferredoxin] + H2O. Involved in the biosynthesis of forosamine ((4-dimethylamino)-2,3,4,6-tetradeoxy-alpha-D-threo-hexopyranose), a highly deoxygenated sugar component of several bioactive natural products such as the insecticidal spinosyns A and D. Catalyzes C-3 deoxygenation of dTDP-4-keto-2,6-dideoxy-alpha-D-glucose to yield dTDP-4-keto-2,3,6-trideoxy-D-glucose via a combined transamination-deoxygenation reaction. The catalysis is initiated by a transamination step in which pyridoxal 5'-phosphate (PLP) is converted to pyridoxamine 5'-phosphate (PMP) in the presence of L-glutamate. This coenzyme then forms a Schiff base with dTDP-4-keto-2,6-dideoxy-alpha-D-glucose and the resulting adduct undergoes a PMP-mediated beta-dehydration reaction to give a sugar enamine intermediate, which after a 2 electrons reduction and hydrolysis yields dTDP-4-keto-2,3,6-trideoxy-D-glucose as a product. Requires cellular reductase (ferredoxin or flavodoxin reductase) rather than a specific partner reductase. L-glutamate is 20-fold more efficient than L-aspartate as an amino donor. In the absence of an electron source and in the presence of L-glutamate, catalyzes a transamination reaction, converting dTDP-4-keto-2,6-dideoxy-alpha-D-glucose to dTDP-4-amino-2,4,6-trideoxy-D-glucose. The chain is dTDP-4-dehydro-2,6-dideoxy-D-glucose 3-dehydratase from Saccharopolyspora spinosa.